The sequence spans 209 residues: Uracil phosphoribosyltransferase (209 aa).

5-phospho-alpha-D-ribose 1-diphosphate contacts are provided by residues Arg79, Arg104, and 131-139 (DPMLATGGS). Uracil is bound by residues Ile194 and 199–201 (GDA). Residue Asp200 participates in 5-phospho-alpha-D-ribose 1-diphosphate binding.

This sequence belongs to the UPRTase family. Requires Mg(2+) as cofactor.

It carries out the reaction UMP + diphosphate = 5-phospho-alpha-D-ribose 1-diphosphate + uracil. The protein operates within pyrimidine metabolism; UMP biosynthesis via salvage pathway; UMP from uracil: step 1/1. Its activity is regulated as follows. Allosterically activated by GTP. In terms of biological role, catalyzes the conversion of uracil and 5-phospho-alpha-D-ribose 1-diphosphate (PRPP) to UMP and diphosphate. This chain is Uracil phosphoribosyltransferase, found in Clostridium acetobutylicum (strain ATCC 824 / DSM 792 / JCM 1419 / IAM 19013 / LMG 5710 / NBRC 13948 / NRRL B-527 / VKM B-1787 / 2291 / W).